A 604-amino-acid chain; its full sequence is MSEHDMQNTNPPLPPMPPEITQLLSGLDAAQWAWLSGYAWAKAGNGASAGLPALQTALPTAEPFSVTVLSASQTGNAKSVADKAADSLEAAGIQVSRAELKDYKAKNIAGERRLLLVTSTQGEGEPPEEAVVLHKLLNGKKAPKLDKLQFAVLGLGDSSYPNFCRAGKDFDKRFEELGAKRLLERVDADLDFAAAADGWTDNIAALLKEEAAKNRATPAPQTTPPAGLQTAPDGRYCKADPFPAALLANQKITARQSDKDVRHIEIDLSGSDLHYLPGDALGVWFDNDPALVREILDLLGIDQATEIQAGGKTLPVASALLSHFELTQNTPAFVKGYAPFADDDELDRIAADNAVLQGFVQSTPIADVLHRFPAKLTAEQFAGLLRPLAPRLYSISSSQAEVGDEVHLTVGAVRFEHEGRARAGGASGFLADRLEEDGTVRVFVERNDGFRLPEDSRKPIVMIGSGTGVAPFRAFVQQRAAENAEGKNWLFFGNPHFARDFLYQTEWQQFAKDGFLHRYDFAWSRDQEEKIYVQDKIREQAEGLWQWLQEGAHIYVCGDAAKMAKDVEAALLDVIIGAGHLDEEGAEEYLDMLREEKRYQRDVY.

Residues 66–204 (VTVLSASQTG…AADGWTDNIA (139 aa)) form the Flavodoxin-like domain. FMN is bound by residues 72–77 (SQTGNA), 119–122 (STQG), and 155–164 (LGDSSYPNFC). The FAD-binding FR-type domain maps to 239–453 (ADPFPAALLA…VERNDGFRLP (215 aa)). FAD is bound by residues Thr-327, Gln-361, 391-394 (RLYS), 409-411 (TVG), and 424-427 (GGAS). Residues 524–525 (SR), 530–534 (KIYVQ), and Asp-566 each bind NADP(+). Tyr-604 is an FAD binding site.

This sequence belongs to the NADPH-dependent sulphite reductase flavoprotein subunit CysJ family. It in the N-terminal section; belongs to the flavodoxin family. In the C-terminal section; belongs to the flavoprotein pyridine nucleotide cytochrome reductase family. As to quaternary structure, alpha(8)-beta(8). The alpha component is a flavoprotein, the beta component is a hemoprotein. The cofactor is FAD. Requires FMN as cofactor.

It carries out the reaction hydrogen sulfide + 3 NADP(+) + 3 H2O = sulfite + 3 NADPH + 4 H(+). Its pathway is sulfur metabolism; hydrogen sulfide biosynthesis; hydrogen sulfide from sulfite (NADPH route): step 1/1. Component of the sulfite reductase complex that catalyzes the 6-electron reduction of sulfite to sulfide. This is one of several activities required for the biosynthesis of L-cysteine from sulfate. The flavoprotein component catalyzes the electron flow from NADPH -&gt; FAD -&gt; FMN to the hemoprotein component. The protein is Sulfite reductase [NADPH] flavoprotein alpha-component of Neisseria meningitidis serogroup A / serotype 4A (strain DSM 15465 / Z2491).